We begin with the raw amino-acid sequence, 283 residues long: Phosphate import ATP-binding protein PstB 2 (283 aa).

One can recognise an ABC transporter domain in the interval 36 to 278; sequence LQVKQFNFYY…PKKKQTEDYI (243 aa). ATP is bound at residue 69 to 76; sequence GPSGCGKS.

This sequence belongs to the ABC transporter superfamily. Phosphate importer (TC 3.A.1.7) family. As to quaternary structure, the complex is composed of two ATP-binding proteins (PstB), two transmembrane proteins (PstC and PstA) and a solute-binding protein (PstS).

Its subcellular location is the cell inner membrane. The catalysed reaction is phosphate(out) + ATP + H2O = ADP + 2 phosphate(in) + H(+). Part of the ABC transporter complex PstSACB involved in phosphate import. Responsible for energy coupling to the transport system. The chain is Phosphate import ATP-binding protein PstB 2 from Nitrosococcus oceani (strain ATCC 19707 / BCRC 17464 / JCM 30415 / NCIMB 11848 / C-107).